Reading from the N-terminus, the 447-residue chain is Trigger factor (447 aa).

Residues 159 to 244 (GDMLLMQVES…VREIKEEKLP (86 aa)) form the PPIase FKBP-type domain.

Belongs to the FKBP-type PPIase family. Tig subfamily.

It is found in the cytoplasm. The enzyme catalyses [protein]-peptidylproline (omega=180) = [protein]-peptidylproline (omega=0). Functionally, involved in protein export. Acts as a chaperone by maintaining the newly synthesized protein in an open conformation. Functions as a peptidyl-prolyl cis-trans isomerase. This Dehalococcoides mccartyi (strain CBDB1) protein is Trigger factor.